The chain runs to 626 residues: (R)-linalool synthase 2, chloroplastic (626 aa).

The transit peptide at 1–21 (MAFVSIAPLASRCCVHKSFVS) directs the protein to the chloroplast. Residues D377, D381, and E529 each coordinate Mg(2+). The short motif at 377–381 (DDIYD) is the DDXXD motif element.

Belongs to the terpene synthase family. Tpsd subfamily. Mg(2+) serves as cofactor. Mn(2+) is required as a cofactor.

Its subcellular location is the plastid. The protein localises to the chloroplast. It catalyses the reaction (2E)-geranyl diphosphate + H2O = (R)-linalool + diphosphate. The protein operates within terpene metabolism; oleoresin biosynthesis. In terms of biological role, terpene synthase (mono-TPS) involved in the biosynthesis of monoterpene natural products included in conifer oleoresin secretions and volatile emissions; these compounds contribute to biotic and abiotic stress defense against herbivores and pathogens. Catalyzes the conversion of (2E)-geranyl diphosphate (GPP) to (R)-linalool. The protein is (R)-linalool synthase 2, chloroplastic of Picea sitchensis (Sitka spruce).